The sequence spans 351 residues: Adenine deaminase (351 aa).

Residues His20, His22, and His200 each contribute to the Zn(2+) site. Catalysis depends on Glu203, which acts as the Proton donor. Residue Asp281 participates in Zn(2+) binding. Asp282 is a substrate binding site.

The protein belongs to the metallo-dependent hydrolases superfamily. Adenosine and AMP deaminases family. Adenine deaminase type 2 subfamily. Requires Zn(2+) as cofactor.

It carries out the reaction adenine + H2O + H(+) = hypoxanthine + NH4(+). In terms of biological role, catalyzes the hydrolytic deamination of adenine to hypoxanthine. Plays an important role in the purine salvage pathway and in nitrogen catabolism. This Cupriavidus taiwanensis (strain DSM 17343 / BCRC 17206 / CCUG 44338 / CIP 107171 / LMG 19424 / R1) (Ralstonia taiwanensis (strain LMG 19424)) protein is Adenine deaminase.